The following is a 28-amino-acid chain: Chassatide C12 (28 aa).

Positions 1-28 form a cross-link, cyclopeptide (Glu-Asn); that stretch reads EYCGESCYLIPCFTPGCYCVSRQCVNKN. Intrachain disulfides connect Cys-3-Cys-17, Cys-7-Cys-19, and Cys-12-Cys-24.

Post-translationally, this is a cyclic peptide. Expressed in fruit, pedicel, leaf and stem but not in root (at protein level).

Probably participates in a plant defense mechanism. The polypeptide is Chassatide C12 (Chassalia chartacea (Chassalia curviflora)).